We begin with the raw amino-acid sequence, 1106 residues long: Putative pre-mRNA-splicing factor ATP-dependent RNA helicase DHX16 (1106 aa).

3 disordered regions span residues K73–K100, D120–R286, and Y366–N394. Low complexity predominate over residues T78–S94. Positions K138–K155 are enriched in basic residues. A compositionally biased stretch (basic and acidic residues) spans D156 to N167. The segment covering N189–N201 has biased composition (low complexity). Over residues R232 to T283 the composition is skewed to basic and acidic residues. The Helicase ATP-binding domain occupies I477–P640. Position 490–497 (G490–T497) interacts with ATP. A DEAH box motif is present at residues D587–H590. The 174-residue stretch at T665–G838 folds into the Helicase C-terminal domain.

This sequence belongs to the DEAD box helicase family. DEAH subfamily. DDX16/PRP8 sub-subfamily. Component of pre-catalytic spliceosome complexes.

The protein localises to the nucleus. It is found in the nucleoplasm. The catalysed reaction is ATP + H2O = ADP + phosphate + H(+). Its function is as follows. Required for pre-mRNA splicing as component of the spliceosome. Contributes to pre-mRNA splicing after spliceosome formation and prior to the first transesterification reaction. The polypeptide is Putative pre-mRNA-splicing factor ATP-dependent RNA helicase DHX16 (dhx16) (Dictyostelium discoideum (Social amoeba)).